The primary structure comprises 125 residues: Ino eighty subunit 5 (125 aa).

Thr124 carries the post-translational modification Phosphothreonine.

Component of the chromatin-remodeling INO80 complex, at least composed of ARP4, ARP5, ARP8, RVB1, RVB2, TAF14, NHP10, IES1, IES3, IES4, IES6, ACT1, IES2, IES5 and INO80.

The protein localises to the nucleus. The chain is Ino eighty subunit 5 (IES5) from Saccharomyces cerevisiae (strain ATCC 204508 / S288c) (Baker's yeast).